A 110-amino-acid chain; its full sequence is U-scoloptoxin(16)-Er6a (110 aa).

The N-terminal stretch at 1–26 (MTSTRKLSVSCLIVFMVSSLIAVSSG) is a signal peptide.

This sequence belongs to the scoloptoxin-16 family. In terms of processing, contains 4 disulfide bonds. In terms of tissue distribution, expressed by the venom gland.

It localises to the secreted. This Ethmostigmus rubripes (Giant centipede) protein is U-scoloptoxin(16)-Er6a.